We begin with the raw amino-acid sequence, 429 residues long: Glutamate-1-semialdehyde 2,1-aminomutase 2 (429 aa).

Lysine 267 carries the N6-(pyridoxal phosphate)lysine modification.

Belongs to the class-III pyridoxal-phosphate-dependent aminotransferase family. HemL subfamily. In terms of assembly, homodimer. The cofactor is pyridoxal 5'-phosphate.

Its subcellular location is the cytoplasm. The catalysed reaction is (S)-4-amino-5-oxopentanoate = 5-aminolevulinate. It functions in the pathway porphyrin-containing compound metabolism; protoporphyrin-IX biosynthesis; 5-aminolevulinate from L-glutamyl-tRNA(Glu): step 2/2. This Brevibacillus brevis (strain 47 / JCM 6285 / NBRC 100599) protein is Glutamate-1-semialdehyde 2,1-aminomutase 2.